The chain runs to 351 residues: DNA polymerase IV (351 aa).

Residues 4 to 185 (IIHVDMDCFF…LPLAKIPGVG (182 aa)) form the UmuC domain. The Mg(2+) site is built by Asp8 and Asp103. The active site involves Glu104.

The protein belongs to the DNA polymerase type-Y family. In terms of assembly, monomer. Requires Mg(2+) as cofactor.

The protein resides in the cytoplasm. It catalyses the reaction DNA(n) + a 2'-deoxyribonucleoside 5'-triphosphate = DNA(n+1) + diphosphate. Functionally, poorly processive, error-prone DNA polymerase involved in untargeted mutagenesis. Copies undamaged DNA at stalled replication forks, which arise in vivo from mismatched or misaligned primer ends. These misaligned primers can be extended by PolIV. Exhibits no 3'-5' exonuclease (proofreading) activity. May be involved in translesional synthesis, in conjunction with the beta clamp from PolIII. In Escherichia coli O1:K1 / APEC, this protein is DNA polymerase IV.